Here is a 427-residue protein sequence, read N- to C-terminus: Diaminobutyrate--2-oxoglutarate transaminase (427 aa).

K269 carries the post-translational modification N6-(pyridoxal phosphate)lysine.

Belongs to the class-III pyridoxal-phosphate-dependent aminotransferase family. The cofactor is pyridoxal 5'-phosphate.

The catalysed reaction is L-2,4-diaminobutanoate + 2-oxoglutarate = L-aspartate 4-semialdehyde + L-glutamate. Its pathway is amine and polyamine biosynthesis; ectoine biosynthesis; L-ectoine from L-aspartate 4-semialdehyde: step 1/3. In terms of biological role, catalyzes reversively the conversion of L-aspartate beta-semialdehyde (ASA) to L-2,4-diaminobutyrate (DABA) by transamination with L-glutamate. The polypeptide is Diaminobutyrate--2-oxoglutarate transaminase (ectB) (Marinococcus halophilus).